Here is a 91-residue protein sequence, read N- to C-terminus: MAIKLINIGFGNIVSANRLVAIVSPESAPIKRIIQEARDRGMLIDATYGRRTRAVIITDSDHVILSAVQPETVAHRLASKAEEEDINEGEE.

The protein belongs to the RemA family.

This is Putative regulatory protein CLB_2388 from Clostridium botulinum (strain ATCC 19397 / Type A).